The primary structure comprises 538 residues: Dolichol kinase (538 aa).

Residues 1 to 13 (MTRECPSPAPGPG) lie on the Lumenal side of the membrane. Residues 14 to 34 (APLSGSVLAEAAVVFAVVLSI) form a helical membrane-spanning segment. Residues 35 to 74 (HATVWDRYSWCAVALAVQAFYVQYKWDRLLQQGSAVFQFR) are Cytoplasmic-facing. A helical membrane pass occupies residues 75–95 (MSANSGLLPASMVMPLLGLVM). At 96–111 (KERCQTAGNPFFERFG) the chain is on the lumenal side. A helical membrane pass occupies residues 112 to 132 (IVVAATGMAVALFSSVLALGI). At 133–134 (TR) the chain is on the cytoplasmic side. The helical transmembrane segment at 135–155 (PVPTNTCVILGLAGGVIIYIM) threads the bilayer. Residues 156–163 (KHSLSVGE) lie on the Lumenal side of the membrane. Residues 164 to 184 (VIEVLEVLLIFVYLNMILLYL) traverse the membrane as a helical segment. Residues 185–188 (LPRC) lie on the Cytoplasmic side of the membrane. The helical transmembrane segment at 189-209 (FTPGEALLVLGGISFVLNQLI) threads the bilayer. The Lumenal portion of the chain corresponds to 210-224 (KRSLTLVESQGDPVD). Residues 225–245 (FFLLVVVVGMVLMGIFFSTLF) traverse the membrane as a helical segment. Over 246–254 (VFMDSGTWA) the chain is Cytoplasmic. Residues 255-275 (SSIFFHLMTCVLSLGVVLPWL) traverse the membrane as a helical segment. Over 276 to 297 (HRLIRRNPLLWLLQFLFQTDTR) the chain is Lumenal. The helical transmembrane segment at 298–318 (IYLLAYWSLLATLACLVVLYQ) threads the bilayer. Residues 319-337 (NAKRSSSESKKHQAPTIAR) are Cytoplasmic-facing. Residues 338–354 (KYFHLIVVATYIPGIIF) traverse the membrane as a helical segment. Topologically, residues 355–359 (DRPLL) are lumenal. Residues 360–380 (YVAATVCLAVFIFLEYVRYFR) traverse the membrane as a helical segment. The Cytoplasmic segment spans residues 381 to 401 (IKPLGHTLRSFLSLFLDERDS). A helical membrane pass occupies residues 402–422 (GPLILTHIYLLLGMSLPIWLI). The Lumenal portion of the chain corresponds to 423-436 (PRPCTQKGSLGGAR). Residues 437 to 457 (ALVPYAGVLAVGVGDTVASIF) form a helical membrane-spanning segment. The Cytoplasmic portion of the chain corresponds to 458–472 (GSTMGEIRWPGTKKT). The tract at residues 459–474 (STMGEIRWPGTKKTFE) is CTP-binding. The chain crosses the membrane as a helical span at residues 473-493 (FEGTMTSIFAQIISVALILIF). The Lumenal segment spans residues 494 to 495 (DS). Residues 496–516 (GVDLNYSYAWILGSISTVSLL) form a helical membrane-spanning segment. Residues 517–538 (EAYTTQIDNLLLPLYLLILLMA) lie on the Cytoplasmic side of the membrane.

This sequence belongs to the polyprenol kinase family. Ubiquitous.

The protein localises to the endoplasmic reticulum membrane. It carries out the reaction a di-trans,poly-cis-dolichol + CTP = a di-trans,poly-cis-dolichyl phosphate + CDP + H(+). It participates in protein modification; protein glycosylation. Its function is as follows. Catalyzes CTP-mediated phosphorylation of dolichol, the terminal step in de novo dolichyl monophosphate (Dol-P) biosynthesis. Dol-P is a lipid carrier essential for the synthesis of N-linked and O-linked oligosaccharides and for GPI anchors. The polypeptide is Dolichol kinase (DOLK) (Homo sapiens (Human)).